A 61-amino-acid chain; its full sequence is Photosystem II reaction center protein K (61 aa).

A propeptide spanning residues 1-24 is cleaved from the precursor; sequence MPNILSLTCICFNSVLYPTSFFFA. Residues 32–52 traverse the membrane as a helical segment; that stretch reads IFNPIVDIMPVIPLFFFLLAF.

It belongs to the PsbK family. In terms of assembly, PSII is composed of 1 copy each of membrane proteins PsbA, PsbB, PsbC, PsbD, PsbE, PsbF, PsbH, PsbI, PsbJ, PsbK, PsbL, PsbM, PsbT, PsbX, PsbY, PsbZ, Psb30/Ycf12, at least 3 peripheral proteins of the oxygen-evolving complex and a large number of cofactors. It forms dimeric complexes. Detected in both etioplasts and green leaves; PSII is only assembled in green leaves.

It localises to the plastid. The protein resides in the chloroplast thylakoid membrane. In terms of biological role, one of the components of the core complex of photosystem II (PSII). PSII is a light-driven water:plastoquinone oxidoreductase that uses light energy to abstract electrons from H(2)O, generating O(2) and a proton gradient subsequently used for ATP formation. It consists of a core antenna complex that captures photons, and an electron transfer chain that converts photonic excitation into a charge separation. In Hordeum vulgare (Barley), this protein is Photosystem II reaction center protein K.